The sequence spans 139 residues: uncharacterized protein (139 aa).

Positions 9 to 133 constitute a VOC domain; it reads QAAQIRIARP…DGWRIVFMNS (125 aa).

This is an uncharacterized protein from Bacillus subtilis (strain 168).